We begin with the raw amino-acid sequence, 493 residues long: Alpha-amylase-related protein (493 aa).

Positions 1–19 (MFKFATAVILCLAASSTLA) are cleaved as a signal peptide. Glutamine 20 is subject to Pyrrolidone carboxylic acid. A disulfide bridge connects residues cysteine 47 and cysteine 103. 3 residues coordinate Ca(2+): asparagine 117, glutamine 168, and aspartate 177. Cysteine 156 and cysteine 170 are disulfide-bonded. Residue arginine 205 participates in chloride binding. The Nucleophile role is filled by aspartate 207. Histidine 211 is a binding site for Ca(2+). The active-site Proton donor is glutamate 244. Asparagine 307 and arginine 342 together coordinate chloride. Disulfide bonds link cysteine 375–cysteine 381, cysteine 417–cysteine 440, and cysteine 447–cysteine 459.

Belongs to the glycosyl hydrolase 13 family. Monomer. Ca(2+) serves as cofactor. The cofactor is chloride.

The protein resides in the secreted. It catalyses the reaction Endohydrolysis of (1-&gt;4)-alpha-D-glucosidic linkages in polysaccharides containing three or more (1-&gt;4)-alpha-linked D-glucose units.. The chain is Alpha-amylase-related protein (Amyrel) from Drosophila ananassae (Fruit fly).